The following is a 422-amino-acid chain: Imidazolonepropionase (422 aa).

Residues histidine 82 and histidine 84 each contribute to the Fe(3+) site. The Zn(2+) site is built by histidine 82 and histidine 84. 4-imidazolone-5-propanoate is bound by residues arginine 91, tyrosine 154, and histidine 187. Residue tyrosine 154 participates in N-formimidoyl-L-glutamate binding. Histidine 252 contributes to the Fe(3+) binding site. Histidine 252 serves as a coordination point for Zn(2+). Glutamate 255 contacts 4-imidazolone-5-propanoate. Aspartate 327 serves as a coordination point for Fe(3+). Position 327 (aspartate 327) interacts with Zn(2+). Positions 329 and 331 each coordinate N-formimidoyl-L-glutamate. Position 332 (serine 332) interacts with 4-imidazolone-5-propanoate.

It belongs to the metallo-dependent hydrolases superfamily. HutI family. The cofactor is Zn(2+). Fe(3+) is required as a cofactor.

It localises to the cytoplasm. It catalyses the reaction 4-imidazolone-5-propanoate + H2O = N-formimidoyl-L-glutamate. It functions in the pathway amino-acid degradation; L-histidine degradation into L-glutamate; N-formimidoyl-L-glutamate from L-histidine: step 3/3. Functionally, catalyzes the hydrolytic cleavage of the carbon-nitrogen bond in imidazolone-5-propanoate to yield N-formimidoyl-L-glutamate. It is the third step in the universal histidine degradation pathway. This chain is Imidazolonepropionase, found in Alkaliphilus metalliredigens (strain QYMF).